The primary structure comprises 131 residues: L-aspartate semialdehyde sulfurtransferase iron-sulfur subunit (131 aa).

2 4Fe-4S ferredoxin-type domains span residues 73–102 and 103–131; these read KVIKRDLEKCVHCGCCITQCPINVIYMDED and YNVVFKEEDCVGCKNCLKACPFKAIEIFE. [4Fe-4S] cluster is bound by residues Cys82, Cys85, Cys88, Cys92, Cys112, Cys115, Cys118, and Cys122.

May form a complex with MJ0100. [4Fe-4S] cluster is required as a cofactor.

Its pathway is amino-acid biosynthesis. In terms of biological role, required for O-acetylhomoserine sulfhydrylase (OAHS)-independent homocysteine (Hcy) biosynthesis. Together with MJ0100, catalyzes the condensation of sulfide with aspartate semialdehyde to generate homocysteine. May be involved in the reduction of the disulfide formed in MJ0100. The sequence is that of L-aspartate semialdehyde sulfurtransferase iron-sulfur subunit from Methanocaldococcus jannaschii (strain ATCC 43067 / DSM 2661 / JAL-1 / JCM 10045 / NBRC 100440) (Methanococcus jannaschii).